We begin with the raw amino-acid sequence, 344 residues long: MIEIRNLSQRFEGPRGWIEALHNVNLTIPQGEVFGIIGRSGAGKSTLVRTINLLTRPSEGSVFVGGRDLTQLSAAELRGARRDIGMIFQHFNLLSSRTVFDNVALPLELAGVKRAQIEATVLPLLDLVGLAAQKDRYPAQISGGQKQRVGIARALASKPKVLLSDEATSALDPETTRAILDLLRRINRELGLTIVLITHQMEVIKDVCDRVAVLDAGRVVEEGNVIDVFMRPHHEVTRALIGDVIAQELPPAMKARVAERLKTGSGHLLRLAFTGSGVDQPILSETIRRYELDFNILHGQIDEIQGRAFGSLAVLATGEPGKVGQAFAYLREQGVVVEELSYVE.

The ABC transporter domain maps to 2-241; the sequence is IEIRNLSQRF…PHHEVTRALI (240 aa). 38–45 contacts ATP; sequence GRSGAGKS.

This sequence belongs to the ABC transporter superfamily. Methionine importer (TC 3.A.1.24) family. As to quaternary structure, the complex is composed of two ATP-binding proteins (MetN), two transmembrane proteins (MetI) and a solute-binding protein (MetQ).

It localises to the cell inner membrane. It catalyses the reaction L-methionine(out) + ATP + H2O = L-methionine(in) + ADP + phosphate + H(+). The catalysed reaction is D-methionine(out) + ATP + H2O = D-methionine(in) + ADP + phosphate + H(+). In terms of biological role, part of the ABC transporter complex MetNIQ involved in methionine import. Responsible for energy coupling to the transport system. The sequence is that of Methionine import ATP-binding protein MetN 1 from Burkholderia mallei (strain ATCC 23344).